An 87-amino-acid polypeptide reads, in one-letter code: MRTLILLTTLLLLALHTQAESPQGSTKEAPDEEQDISVFFGGDKGTALQDAAVKAGVTCSCRTSSCRFGERLSGACRLNGRIYRLCC.

Residues 1–19 form the signal peptide; the sequence is MRTLILLTTLLLLALHTQA. The propeptide occupies 20–58; the sequence is ESPQGSTKEAPDEEQDISVFFGGDKGTALQDAAVKAGVT. Disulfide bonds link cysteine 59–cysteine 87, cysteine 61–cysteine 76, and cysteine 66–cysteine 86.

This sequence belongs to the alpha-defensin family.

The protein localises to the secreted. Its function is as follows. Active in vitro against S.aureus, fungi, Gram-positive and Gram-negative bacteria and to a lesser extent against an enveloped virus. This chain is Neutrophil antibiotic peptide NP-3B, found in Rattus norvegicus (Rat).